A 318-amino-acid polypeptide reads, in one-letter code: Probable cell division protein WhiA (318 aa).

The H-T-H motif DNA-binding region spans 281-314; it reads SLKELGQMLVPPVGKSGVNHRLRKIEEISKKLKE.

Belongs to the WhiA family.

Its function is as follows. Involved in cell division and chromosome segregation. In Thermoanaerobacter sp. (strain X514), this protein is Probable cell division protein WhiA.